The following is a 630-amino-acid chain: Coiled-coil domain-containing protein 120 (630 aa).

Positions Arg-31 to Glu-70 are involved in CYTH2-binding. The stretch at Glu-109 to Leu-173 forms a coiled coil. 2 stretches are compositionally biased toward low complexity: residues His-212–Gly-222 and Ala-282–Ser-297. 2 disordered regions span residues His-212 to Arg-435 and Gly-457 to Leu-534. Positions Arg-326–Gln-335 are enriched in polar residues. Residues Ser-358 and Ser-360 each carry the phosphoserine modification. A compositionally biased stretch (low complexity) spans Ala-421 to Pro-434. Arg-435 carries the omega-N-methylarginine modification.

In terms of assembly, interacts with NIN and CEP170; leading to recruit them to centrosomes. Directly interacts with CYTH2; this interaction stabilizes CCDC120, possibly by preventing ubiquitination. Post-translationally, ubiquitinated; interaction with CYTH2 may prevent ubiquitination.

It localises to the cytoplasm. It is found in the cytoskeleton. The protein localises to the microtubule organizing center. Its subcellular location is the centrosome. The protein resides in the centriole. It localises to the cell projection. It is found in the neuron projection. The protein localises to the growth cone. Its subcellular location is the endosome. Functionally, centriolar protein required for centriole subdistal appendage assembly and microtubule anchoring in interphase cells. Together with CCDC68, cooperate with subdistal appendage components ODF2, NIN and CEP170 for hierarchical subdistal appendage assembly. Recruits NIN and CEP170 to centrosomes. Also required for neurite growth. Localizes CYTH2 to vesicles to allow its transport along neurites, and subsequent ARF6 activation and neurite growth. The chain is Coiled-coil domain-containing protein 120 (CCDC120) from Homo sapiens (Human).